We begin with the raw amino-acid sequence, 293 residues long: uncharacterized protein (293 aa).

The HTH lysR-type domain maps to 1–60; it reads MHITLRQLEVFAEVLKSGSTTQASVMLALSQSAVSAALTDLEGQLGVQLFDRVGKRLVVN. A DNA-binding region (H-T-H motif) is located at residues 20–39; that stretch reads TTQASVMLALSQSAVSAALT.

The protein belongs to the LysR transcriptional regulatory family.

This is an uncharacterized protein from Escherichia coli O157:H7.